A 150-amino-acid chain; its full sequence is MANPAVGAMMGLSLVAVPVFLDTNTQSEQLLAQFASLYDYGHKLMPTIAVATCALHGWVAARKRAAHQPWGRPVLAAVTTITMVPFTWVCMVSTNNALFQLHKGADANMEMVRALIARWQWLHVARSLFPLAGAIVACQTLLKELVGGSR.

4 consecutive transmembrane segments (helical) span residues 1–21 (MANP…PVFL), 41–61 (GHKL…WVAA), 73–93 (PVLA…CMVS), and 128–148 (LFPL…LVGG).

The protein belongs to the anthrone oxygenase family.

Its subcellular location is the membrane. It carries out the reaction emodin anthrone + O2 = emodin + H2O + H(+). It participates in secondary metabolite biosynthesis. In terms of biological role, anthrone oxygenase; part of the gene cluster that mediates the biosynthesis of geodin, an intermediate in the biosynthesis of other natural products. The pathway begins with the synthesis of atrochrysone thioester by the polyketide synthase (PKS) gedC. The atrochrysone carboxyl ACP thioesterase gedB then breaks the thioester bond and releases the atrochrysone carboxylic acid from gedC. The atrochrysone carboxylic acid is then converted to atrochrysone which is further transformed into emodin anthrone. The next step is performed by the emodin anthrone oxygenase gedH that catalyzes the oxidation of emodinanthrone to emodin. Emodin O-methyltransferase encoded probably by gedA then catalyzes methylation of the 8-hydroxy group of emodin to form questin. Ring cleavage of questin by questin oxidase gedK leads to desmethylsulochrin via several intermediates including questin epoxide. Another methylation step probably catalyzed by methyltransferase gedG leads to the formation of sulochrin which is further converted to dihydrogeodin by the sulochrin halogenase gedL. Finally, the dihydrogeodin oxidase gedJ catalyzes the stereospecific phenol oxidative coupling reaction converting dihydrogeodin to geodin. The polypeptide is Anthrone oxygenase gedH (Aspergillus terreus (strain NIH 2624 / FGSC A1156)).